Consider the following 589-residue polypeptide: Aspartate--tRNA ligase (589 aa).

Glutamate 176 lines the L-aspartate pocket. The tract at residues 200–203 (QLFK) is aspartate. L-aspartate is bound at residue arginine 222. ATP contacts are provided by residues 222 to 224 (RDE) and glutamine 231. Residue histidine 449 coordinates L-aspartate. Residue glutamate 483 coordinates ATP. Residue arginine 490 participates in L-aspartate binding. 535–538 (GLDR) contacts ATP.

It belongs to the class-II aminoacyl-tRNA synthetase family. Type 1 subfamily. As to quaternary structure, homodimer.

It is found in the cytoplasm. It catalyses the reaction tRNA(Asp) + L-aspartate + ATP = L-aspartyl-tRNA(Asp) + AMP + diphosphate. Catalyzes the attachment of L-aspartate to tRNA(Asp) in a two-step reaction: L-aspartate is first activated by ATP to form Asp-AMP and then transferred to the acceptor end of tRNA(Asp). In Enterococcus faecalis (strain ATCC 700802 / V583), this protein is Aspartate--tRNA ligase.